The sequence spans 335 residues: DDRGK domain-containing protein 1 (335 aa).

The Lumenal segment spans residues 1 to 6 (MGDTYS). A helical transmembrane segment spans residues 7–27 (LVLVAGYLSIFLFIGAIGYFY). At 28–335 (LSKPRIPSSN…NNDQDPVDTN (308 aa)) the chain is on the cytoplasmic side. Positions 37 to 124 (NVNEQQQQQQ…GEDIGVVAPG (88 aa)) are disordered. 2 stretches are compositionally biased toward low complexity: residues 41-56 (QQQQQQQQQQQQQQPQ) and 91-103 (SSGSDSDNSTNSD). Residues 104–117 (NYDDDNGQEGEGED) are compositionally biased toward acidic residues.

It belongs to the DDRGK1 family.

It is found in the endoplasmic reticulum membrane. In terms of biological role, substrate adapter for ufmylation, the covalent attachment of the ubiquitin-like modifier UFM1 to substrate proteins. The chain is DDRGK domain-containing protein 1 from Dictyostelium discoideum (Social amoeba).